The following is an 818-amino-acid chain: LisH domain-containing protein ARMC9 (818 aa).

A LisH domain is found at 7–39 (HESELLGLVKEYLDFAEFEDTLKTFSKECKIKG). The stretch at 204–230 (QSNKEILQQLHQQLVEAERRSVTYLKR) forms a coiled coil. Position 582 is a phosphoserine (Ser-582). Disordered regions lie at residues 642–755 (VQWS…TTRE) and 790–818 (SSCGPQQASRPGSTASSTRGLPSSQSHRK). Over residues 701-711 (STPESCVSSSS) the composition is skewed to low complexity. Residues 792–818 (CGPQQASRPGSTASSTRGLPSSQSHRK) show a composition bias toward polar residues.

In terms of assembly, interacts with TOGARAM1, CCDC66, CEP104, CSPP1 and CEP290. Interacts with NDUFAF2. In terms of tissue distribution, strongly expressed in most melanomas and melanocytes. Weakly expressed in the testis.

The protein localises to the cytoplasm. It localises to the cytoskeleton. The protein resides in the cilium basal body. Its subcellular location is the cell projection. It is found in the cilium. The protein localises to the microtubule organizing center. It localises to the centrosome. The protein resides in the centriole. Functionally, involved in ciliogenesis. It is required for appropriate acetylation and polyglutamylation of ciliary microtubules, and regulation of cilium length. Acts as a positive regulator of hedgehog (Hh)signaling. May participate in the trafficking and/or retention of GLI2 and GLI3 proteins at the ciliary tip. This Homo sapiens (Human) protein is LisH domain-containing protein ARMC9.